The primary structure comprises 255 residues: Putative glutamine amidotransferase YafJ (255 aa).

Catalysis depends on Cys-2, which acts as the For GATase activity. The Glutamine amidotransferase type-2 domain maps to 2–251 (CELLGMSANV…PGEWRLFCLG (250 aa)).

The chain is Putative glutamine amidotransferase YafJ (yafJ) from Escherichia coli (strain K12).